The chain runs to 107 residues: Putative ankyrin repeat protein L14 (107 aa).

ANK repeat units follow at residues 19–48, 49–78, and 80–107; these read DNNY…NIRA, DNDC…NIRA, and NDCA…AVLS.

In Acanthamoeba polyphaga (Amoeba), this protein is Putative ankyrin repeat protein L14.